Here is a 314-residue protein sequence, read N- to C-terminus: Taste receptor type 2 member 42 (314 aa).

The Extracellular segment spans residues M1–K7. Residues I8–G28 traverse the membrane as a helical segment. Topologically, residues L29 to C50 are cytoplasmic. The chain crosses the membrane as a helical span at residues L51–L71. Residues A72 to T101 are Extracellular-facing. The chain crosses the membrane as a helical span at residues C102–L122. At R123–N127 the chain is on the cytoplasmic side. The helical transmembrane segment at G128–L148 threads the bilayer. At E149–L187 the chain is on the extracellular side. N163 is a glycosylation site (N-linked (GlcNAc...) asparagine). The chain crosses the membrane as a helical span at residues T188–V208. The Cytoplasmic portion of the chain corresponds to R209–S238. A helical transmembrane segment spans residues F239–M259. Topologically, residues L260–Y265 are extracellular. The helical transmembrane segment at I266–L286 threads the bilayer. Residues G287–L314 lie on the Cytoplasmic side of the membrane.

Belongs to the G-protein coupled receptor T2R family.

The protein resides in the membrane. In terms of biological role, receptor that may play a role in the perception of bitterness and is gustducin-linked. May play a role in sensing the chemical composition of the gastrointestinal content. The activity of this receptor may stimulate alpha gustducin, mediate PLC-beta-2 activation and lead to the gating of TRPM5. The polypeptide is Taste receptor type 2 member 42 (TAS2R42) (Pan paniscus (Pygmy chimpanzee)).